We begin with the raw amino-acid sequence, 383 residues long: Acetylornithine deacetylase (383 aa).

His80 provides a ligand contact to Zn(2+). Asp82 is a catalytic residue. Asp112 contacts Zn(2+). Residue Glu144 is part of the active site. Positions 145, 169, and 355 each coordinate Zn(2+).

Belongs to the peptidase M20A family. ArgE subfamily. As to quaternary structure, homodimer. Requires Zn(2+) as cofactor. It depends on Co(2+) as a cofactor. Glutathione is required as a cofactor.

It localises to the cytoplasm. It catalyses the reaction N(2)-acetyl-L-ornithine + H2O = L-ornithine + acetate. It participates in amino-acid biosynthesis; L-arginine biosynthesis; L-ornithine from N(2)-acetyl-L-ornithine (linear): step 1/1. In terms of biological role, catalyzes the hydrolysis of the amide bond of N(2)-acetylated L-amino acids. Cleaves the acetyl group from N-acetyl-L-ornithine to form L-ornithine, an intermediate in L-arginine biosynthesis pathway, and a branchpoint in the synthesis of polyamines. The polypeptide is Acetylornithine deacetylase (Pectobacterium atrosepticum (strain SCRI 1043 / ATCC BAA-672) (Erwinia carotovora subsp. atroseptica)).